The sequence spans 510 residues: ATP synthase subunit alpha (510 aa).

Residue 169–176 (GDRQTGKT) participates in ATP binding.

The protein belongs to the ATPase alpha/beta chains family. In terms of assembly, F-type ATPases have 2 components, CF(1) - the catalytic core - and CF(0) - the membrane proton channel. CF(1) has five subunits: alpha(3), beta(3), gamma(1), delta(1), epsilon(1). CF(0) has three main subunits: a(1), b(2) and c(9-12). The alpha and beta chains form an alternating ring which encloses part of the gamma chain. CF(1) is attached to CF(0) by a central stalk formed by the gamma and epsilon chains, while a peripheral stalk is formed by the delta and b chains.

It is found in the cell inner membrane. The enzyme catalyses ATP + H2O + 4 H(+)(in) = ADP + phosphate + 5 H(+)(out). Produces ATP from ADP in the presence of a proton gradient across the membrane. The alpha chain is a regulatory subunit. In Rickettsia peacockii (strain Rustic), this protein is ATP synthase subunit alpha.